The sequence spans 328 residues: Nucleotide-binding protein BLD_0430 (328 aa).

Residues 1-35 form a disordered region; the sequence is MNQQTTNRDTGEAAATNAPANSATSTSTPDNQPTP. Low complexity predominate over residues 13–29; that stretch reads AAATNAPANSATSTSTP. ATP is bound at residue 46-53; sequence GMSGAGRS. GTP is bound at residue 101–104; the sequence is DVRS.

Belongs to the RapZ-like family.

Its function is as follows. Displays ATPase and GTPase activities. In Bifidobacterium longum (strain DJO10A), this protein is Nucleotide-binding protein BLD_0430.